A 106-amino-acid polypeptide reads, in one-letter code: Large ribosomal subunit protein eL34 (106 aa).

Belongs to the eukaryotic ribosomal protein eL34 family.

This chain is Large ribosomal subunit protein eL34, found in Hyperthermus butylicus (strain DSM 5456 / JCM 9403 / PLM1-5).